A 232-amino-acid chain; its full sequence is Sugar fermentation stimulation protein homolog (232 aa).

It belongs to the SfsA family.

This Brucella anthropi (strain ATCC 49188 / DSM 6882 / CCUG 24695 / JCM 21032 / LMG 3331 / NBRC 15819 / NCTC 12168 / Alc 37) (Ochrobactrum anthropi) protein is Sugar fermentation stimulation protein homolog.